A 305-amino-acid polypeptide reads, in one-letter code: Pseudouridine-5'-phosphate glycosidase (305 aa).

The active-site Proton donor is Glu-28. Residues Lys-89 and Val-109 each contribute to the substrate site. Asp-141 serves as a coordination point for Mn(2+). Ser-143–Asp-145 is a substrate binding site. Lys-162 serves as the catalytic Nucleophile.

This sequence belongs to the pseudouridine-5'-phosphate glycosidase family. Homotrimer. Requires Mn(2+) as cofactor.

The enzyme catalyses D-ribose 5-phosphate + uracil = psi-UMP + H2O. In terms of biological role, catalyzes the reversible cleavage of pseudouridine 5'-phosphate (PsiMP) to ribose 5-phosphate and uracil. Functions biologically in the cleavage direction, as part of a pseudouridine degradation pathway. The sequence is that of Pseudouridine-5'-phosphate glycosidase from Dinoroseobacter shibae (strain DSM 16493 / NCIMB 14021 / DFL 12).